We begin with the raw amino-acid sequence, 499 residues long: MANAISVGVAVQLVLTVLLASIPLRVIWNLFFHPLSYIPGPRLWIAFPIFRQIASIRGVFDAQMCEYHRKYGNAVRFSPNEVSFITEQAWRDIYDHRPNQLERFILSTTRRPDIFDANEIDHARYRKAMLPAFSPKGLQEQEPIVRGYIDTFIERLREVSATGESTDMVKWYNFTTFDIIGDLAFGESFGGLRNREYHFTISFTFEAFKLLSYLEAGAAYPLLLKILMAFTPQSLIEARDKKEEHAETTVRKRLDNRALHGRGDFMDYLLRNRGEKQGLNDKELVANASTLITAGSETTATILSGITYWLLQTPNVLQKVTEEVRSAFQSEADITFTSATSQLPYMLACFQEAFRHYPPVPTGMPRVTPSHGITKISGYDISPNTKVSVHQLAAYSHPDNFHRPREFVPERWLPDAKTNPSSPWYNDRRETVQPFNVGPRNCVGRNLAEQEIRVMLARVLWNFDLELAPESKNWTDQKTHFLWEKGALMCKLHDRFASK.

A helical membrane pass occupies residues 7 to 29 (VGVAVQLVLTVLLASIPLRVIWN). N-linked (GlcNAc...) asparagine glycosylation is found at N173 and N287. A heme-binding site is contributed by C442. The N-linked (GlcNAc...) asparagine glycan is linked to N473.

The protein belongs to the cytochrome P450 family. Requires heme as cofactor.

It localises to the membrane. It functions in the pathway sesquiterpene biosynthesis; trichothecene biosynthesis. Functionally, trichothecene C-4 hydroxylase; part of the gene cluster that mediates the production of the antimicrobial trichothecene harzianum A (HA) that plays a role in Botrytis cinerea antagonistic activity and plant defense priming. The biosynthesis of harzianum A begins with the cyclization of farnesyl diphosphate to trichodiene and is catalyzed by the trichodiene synthase TRI5. Trichodiene undergoes a series of oxygenations catalyzed by the cytochrome P450 monooxygenase TRI4. TRI4 controls the addition of 3 oxygens at C-2, C-11, and the C-12, C-13-epoxide to form the intermediate isotrichodiol. Isotrichodiol then undergoes a non-enzymatic isomerization and cyclization to form 12,13-epoxytrichothec-9-ene (EPT) which is further converted to trichodermol by the cytochrome P450 monooxygenase TRI11 via C-4 hydroxylation. The last step of HA synthesis is esterification of an octatriendioyl moiety to the C-4 oxygen of trichodermol. The octatriendioyl moiety is probably produced by the polyketide synthase TRI17 and the esterification performed by the trichothecene O-acetyltransferase TRI3. The protein is Trichothecene C-4 hydroxylase of Trichoderma arundinaceum.